The sequence spans 339 residues: O-methyltransferase 7 (339 aa).

G186, D209, S232, F233, and K246 together coordinate S-adenosyl-L-methionine. Catalysis depends on H250, which acts as the Proton acceptor.

The protein belongs to the class I-like SAM-binding methyltransferase superfamily. Cation-independent O-methyltransferase family. COMT subfamily.

It catalyses the reaction (3,5-dichloro-2,4,6-trihydroxyphenyl)hexan-1-one + S-adenosyl-L-methionine = 1-(3,5-dichloro-2,6-dihydroxy-4-methoxyphenyl)hexan-1-one + S-adenosyl-L-homocysteine + H(+). The protein is O-methyltransferase 7 (omt7) of Dictyostelium discoideum (Social amoeba).